The sequence spans 850 residues: Pentatricopeptide repeat-containing protein At5g16860 (850 aa).

PPR repeat units lie at residues 58–88, 91–125, 126–160, 161–191, 192–227, 228–262, 263–293, 294–328, 329–363, 364–398, 406–436, 439–473, 476–510, 512–542, 543–577, 578–608, and 614–644; these read TLNLTSHLISTYISVGCLSHAVSLLRRFPPS, GVYHWNSLIRSYGDNGCANKCLYLFGLMHSLSWTP, DNYTFPFVFKACGEISSVRCGESAHALSLVTGFIS, NVFVGNALVAMYSRCRSLSDARKVFDEMSVW, DVVSWNSIIESYAKLGKPKVALEMFSRMTNEFGCRP, DNITLVNVLPPCASLGTHSLGKQLHCFAVTSEMIQ, NMFVGNCLVDMYAKCGMMDEANTVFSNMSVK, DVVSWNAMVAGYSQIGRFEDAVRLFEKMQEEKIKM, DVVTWSAAISGYAQRGLGYEALGVCRQMLSSGIKP, NEVTLISVLSGCASVGALMHGKEIHCYAIKYPIDL, ENMVINQLIDMYAKCKKVDTARAMFDSLSPK, DVVTWTVMIGGYSQHGDANKALELLSEMFEEDCQT, NAFTISCALVACASLAALRIGKQIHAYALRNQQNA, PLFVSNCLIDMYAKCGSISDARLVFDNMMAK, NEVTWTSLMTGYGMHGYGEEALGIFDEMRRIGFKL, DGVTLLVVLYACSHSGMIDQGMEYFNRMKTV, and GPEHYACLVDLLGRAGRLNAALRLIEEMPME. The segment at 649-724 is type E motif; it reads VWVAFLSCCR…RPGCSWVEGI (76 aa). The type E(+) motif stretch occupies residues 725–755; sequence KGTTTFFVGDKTHPHAKEIYQVLLDHMQRIK. Residues 756–850 are type DYW motif; the sequence is DIGYVPETGF…NGSCSCKGYW (95 aa).

The protein belongs to the PPR family. PCMP-H subfamily.

The sequence is that of Pentatricopeptide repeat-containing protein At5g16860 (PCMP-H92) from Arabidopsis thaliana (Mouse-ear cress).